Consider the following 192-residue polypeptide: uncharacterized protein (192 aa).

The signal sequence occupies residues 1–17; it reads MFKKILFPLVALFMLAG. Residue Cys18 is the site of N-palmitoyl cysteine attachment. Cys18 carries S-diacylglycerol cysteine lipidation.

To H.influenzae HI_0162.

It localises to the cell membrane. This is an uncharacterized protein from Escherichia coli O6:H1 (strain CFT073 / ATCC 700928 / UPEC).